Here is a 446-residue protein sequence, read N- to C-terminus: Probable glucan endo-1,3-beta-glucosidase eglC (446 aa).

A signal peptide spans 1–18 (MQFTHLVALALALATSEA). E128 serves as the catalytic Proton donor. N183 carries an N-linked (GlcNAc...) asparagine glycan. E239 serves as the catalytic Nucleophile. N-linked (GlcNAc...) asparagine glycosylation is found at N364 and N370. The tract at residues 393-416 (SSGAGASGASGQSSSSTGSSSAPS) is disordered. The span at 401–416 (ASGQSSSSTGSSSAPS) shows a compositional bias: low complexity. N423 carries GPI-anchor amidated asparagine lipidation. Positions 424–446 (AASGLSGSIFGAVVAVCLALAAL) are cleaved as a propeptide — removed in mature form.

This sequence belongs to the glycosyl hydrolase 17 family. In terms of processing, the GPI-anchor is attached to the protein in the endoplasmic reticulum and serves to target the protein to the cell surface. There, the glucosamine-inositol phospholipid moiety is cleaved off and the GPI-modified mannoprotein is covalently attached via its lipidless GPI glycan remnant to the 1,6-beta-glucan of the outer cell wall layer.

Its subcellular location is the cell membrane. It is found in the secreted. The protein resides in the cell wall. It carries out the reaction Hydrolysis of (1-&gt;3)-beta-D-glucosidic linkages in (1-&gt;3)-beta-D-glucans.. In terms of biological role, glucanases play a role in cell expansion during growth, in cell-cell fusion during mating, and in spore release during sporulation. This enzyme may be involved in beta-glucan degradation and also function biosynthetically as a transglycosylase. In Aspergillus fumigatus (strain ATCC MYA-4609 / CBS 101355 / FGSC A1100 / Af293) (Neosartorya fumigata), this protein is Probable glucan endo-1,3-beta-glucosidase eglC (eglC).